Reading from the N-terminus, the 305-residue chain is Oxygen-dependent coproporphyrinogen-III oxidase (305 aa).

Residue serine 93 participates in substrate binding. Histidine 97 and histidine 107 together coordinate a divalent metal cation. The active-site Proton donor is histidine 107. 109–111 (NVR) is a substrate binding site. Positions 146 and 176 each coordinate a divalent metal cation. Positions 241-276 (YVEFNLVFDRGTLFGLQSGGRTESILMSLPPQVRWG) are important for dimerization. 259-261 (GGR) serves as a coordination point for substrate.

It belongs to the aerobic coproporphyrinogen-III oxidase family. In terms of assembly, homodimer. A divalent metal cation is required as a cofactor.

It is found in the cytoplasm. It carries out the reaction coproporphyrinogen III + O2 + 2 H(+) = protoporphyrinogen IX + 2 CO2 + 2 H2O. The protein operates within porphyrin-containing compound metabolism; protoporphyrin-IX biosynthesis; protoporphyrinogen-IX from coproporphyrinogen-III (O2 route): step 1/1. Involved in the heme biosynthesis. Catalyzes the aerobic oxidative decarboxylation of propionate groups of rings A and B of coproporphyrinogen-III to yield the vinyl groups in protoporphyrinogen-IX. The sequence is that of Oxygen-dependent coproporphyrinogen-III oxidase from Pseudomonas paraeruginosa (strain DSM 24068 / PA7) (Pseudomonas aeruginosa (strain PA7)).